A 94-amino-acid chain; its full sequence is Co-chaperonin GroES (94 aa).

Belongs to the GroES chaperonin family. Heptamer of 7 subunits arranged in a ring. Interacts with the chaperonin GroEL.

Its subcellular location is the cytoplasm. In terms of biological role, together with the chaperonin GroEL, plays an essential role in assisting protein folding. The GroEL-GroES system forms a nano-cage that allows encapsulation of the non-native substrate proteins and provides a physical environment optimized to promote and accelerate protein folding. GroES binds to the apical surface of the GroEL ring, thereby capping the opening of the GroEL channel. The polypeptide is Co-chaperonin GroES (Streptococcus pneumoniae (strain Taiwan19F-14)).